A 372-amino-acid polypeptide reads, in one-letter code: Ribosomal RNA small subunit methyltransferase H (372 aa).

S-adenosyl-L-methionine-binding positions include 78–80 (GGH), aspartate 97, tyrosine 124, aspartate 148, and glutamine 155.

Belongs to the methyltransferase superfamily. RsmH family.

The protein localises to the cytoplasm. The catalysed reaction is cytidine(1402) in 16S rRNA + S-adenosyl-L-methionine = N(4)-methylcytidine(1402) in 16S rRNA + S-adenosyl-L-homocysteine + H(+). Specifically methylates the N4 position of cytidine in position 1402 (C1402) of 16S rRNA. This is Ribosomal RNA small subunit methyltransferase H from Mycobacterium leprae (strain Br4923).